The sequence spans 92 residues: Small archaeal modifier protein 3 (92 aa).

Glycyl lysine isopeptide (Lys-Gly) (interchain with G-Cter in SAMP3) cross-links involve residues lysine 18, lysine 55, and lysine 62. Glycine 92 carries the glycyl adenylate; alternate modification. Residue glycine 92 forms a Glycyl lysine isopeptide (Gly-Lys) (interchain with K-? in acceptor proteins); alternate linkage.

In terms of assembly, monomer. Post-translationally, the C-terminal glycine is likely acyl-adenylated (-COAMP) by UbaA.

Its function is as follows. Functions as a protein modifier covalently attached to lysine residues of substrate proteins. The protein modification process is termed sampylation and involves the formation of an isopeptide bond between the SAMP3 C-terminal glycine carboxylate and the epsilon-amino group of lysine residues on target proteins. Seems to be able to form polymeric chains with itself at Lys-18, Lys-55 and Lys-62, similar to ubiquitin and other ubiquitin-like proteins. SAMP3 appears not to serve as a proteolytic signal in the cell to target proteins for degradation by proteasomes. May regulate molybdenum cofactor (MoCo) biosynthesis by inhibiting the activity of MPT synthase MoaE under aerobic conditions, providing a hierarchy of oxygen use prior to that of alternative electron acceptors such as DMSO. This Haloferax volcanii (strain ATCC 29605 / DSM 3757 / JCM 8879 / NBRC 14742 / NCIMB 2012 / VKM B-1768 / DS2) (Halobacterium volcanii) protein is Small archaeal modifier protein 3 (samp3).